A 739-amino-acid polypeptide reads, in one-letter code: Exocyst complex component 3-like protein (739 aa).

Positions 1 to 370 (MDSAARDKTQ…DVSDLEPLLT (370 aa)) are mediates interaction with EXOC2, EXOC4 and EXOC5.

The protein belongs to the SEC6 family. In terms of assembly, interacts with EXOC2, EXOC4 and EXOC5; may be part of the exocyst.

Its subcellular location is the cytoplasmic vesicle. It localises to the secretory vesicle. Functionally, as part of the exocyst, may play a role in regulated exocytosis of insulin granules. This chain is Exocyst complex component 3-like protein (EXOC3L1), found in Bos taurus (Bovine).